Here is a 120-residue protein sequence, read N- to C-terminus: MFLLYEYDIFWAFLIISSVIPILAFLFSGILAPISKGPEKLSSYESGIEPMGDAWLQFRIRYYMFALVFVVFDVETVFLYPWAMSFDILGVSVFIEALIFVLILIVGLVYAWRKGALEWS.

Helical transmembrane passes span 9–29 (IFWA…LFSG), 64–84 (MFAL…PWAM), and 88–108 (ILGV…IVGL).

The protein belongs to the complex I subunit 3 family. NDH is composed of at least 16 different subunits, 5 of which are encoded in the nucleus.

It is found in the plastid. It localises to the chloroplast thylakoid membrane. It carries out the reaction a plastoquinone + NADH + (n+1) H(+)(in) = a plastoquinol + NAD(+) + n H(+)(out). The enzyme catalyses a plastoquinone + NADPH + (n+1) H(+)(in) = a plastoquinol + NADP(+) + n H(+)(out). NDH shuttles electrons from NAD(P)H:plastoquinone, via FMN and iron-sulfur (Fe-S) centers, to quinones in the photosynthetic chain and possibly in a chloroplast respiratory chain. The immediate electron acceptor for the enzyme in this species is believed to be plastoquinone. Couples the redox reaction to proton translocation, and thus conserves the redox energy in a proton gradient. The chain is NAD(P)H-quinone oxidoreductase subunit 3, chloroplastic from Spinacia oleracea (Spinach).